The following is a 116-amino-acid chain: Venom nerve growth factor (116 aa).

3 cysteine pairs are disulfide-bonded: Cys14/Cys78, Cys56/Cys106, and Cys66/Cys108.

This sequence belongs to the NGF-beta family. Homodimer; non-covalently linked. Not glycosylated. In terms of tissue distribution, expressed by the venom gland.

It localises to the secreted. Its function is as follows. Nerve growth factor is important for the development and maintenance of the sympathetic and sensory nervous systems. It stimulates division and differentiation of sympathetic and embryonic sensory neurons as well as basal forebrain cholinergic neurons in the brain. Its relevance in the snake venom is not clear. However, it has been shown to inhibit metalloproteinase-dependent proteolysis of platelet glycoprotein Ib alpha, suggesting a metalloproteinase inhibition to prevent metalloprotease autodigestion and/or protection against prey proteases. Binds a lipid between the two protein chains in the homodimer. The lipid-bound form promotes histamine relase from mouse mast cells, contrary to the lipid-free form. The protein is Venom nerve growth factor of Naja naja (Indian cobra).